The primary structure comprises 350 residues: S-adenosylmethionine:tRNA ribosyltransferase-isomerase (350 aa).

Belongs to the QueA family. Monomer.

It localises to the cytoplasm. The catalysed reaction is 7-aminomethyl-7-carbaguanosine(34) in tRNA + S-adenosyl-L-methionine = epoxyqueuosine(34) in tRNA + adenine + L-methionine + 2 H(+). Its pathway is tRNA modification; tRNA-queuosine biosynthesis. Its function is as follows. Transfers and isomerizes the ribose moiety from AdoMet to the 7-aminomethyl group of 7-deazaguanine (preQ1-tRNA) to give epoxyqueuosine (oQ-tRNA). The chain is S-adenosylmethionine:tRNA ribosyltransferase-isomerase from Bacillus cereus (strain ZK / E33L).